The sequence spans 185 residues: Elongation factor P (185 aa).

It belongs to the elongation factor P family.

It localises to the cytoplasm. It participates in protein biosynthesis; polypeptide chain elongation. Involved in peptide bond synthesis. Stimulates efficient translation and peptide-bond synthesis on native or reconstituted 70S ribosomes in vitro. Probably functions indirectly by altering the affinity of the ribosome for aminoacyl-tRNA, thus increasing their reactivity as acceptors for peptidyl transferase. In Deinococcus geothermalis (strain DSM 11300 / CIP 105573 / AG-3a), this protein is Elongation factor P.